Here is a 706-residue protein sequence, read N- to C-terminus: Protein MAM3 (706 aa).

The Vacuolar portion of the chain corresponds to 1–16 (MSFLPLRSRSRSGAPH). Residues 17-37 (WVYIILYHIFTIPKIYSLPLL) traverse the membrane as a helical segment. The Cytoplasmic segment spans residues 38 to 65 (SGSHVLNSRDVADSGHSVGDEASVTTYY). In terms of domain architecture, CNNM transmembrane spans 57–240 (DEASVTTYYI…MGVERLTKDE (184 aa)). A helical membrane pass occupies residues 66–86 (IISIILVLLGGVFAGLTLGLM). Over 87–120 (GQDEVYLKVISTSGSNSEKKLAKRVLDLISRGKH) the chain is Vacuolar. A helical transmembrane segment spans residues 121–141 (WVLVTLLLSNVITNETLPIVL). Over 142–145 (DRCL) the chain is Cytoplasmic. A helical transmembrane segment spans residues 146-166 (GGGWQAVVSSTILIVIFGEII). Residues 167 to 177 (PQSVCVKYGLQ) are Vacuolar-facing. A helical transmembrane segment spans residues 178-198 (VGAFFCPFVLVLMYLMYPVAY). Over 199-706 (PIATLLDYML…ANGSSSTIKR (508 aa)) the chain is Cytoplasmic. 2 consecutive CBS domains span residues 259–320 (MTPI…DCLP) and 321–386 (ISHF…IVDE). Disordered regions lie at residues 421 to 495 (SHKE…ASNP), 515 to 540 (ITTH…LSAE), and 557 to 597 (LHTQ…ENQN). Residues 433 to 445 (ESSPLLSPSNSNH) show a composition bias toward low complexity. Residues Ser439 and Ser447 each carry the phosphoserine modification. The span at 472–495 (AVLSPTPQVTEHGTIIPSNLASNP) shows a compositional bias: polar residues. Ser527 is modified (phosphoserine). A compositionally biased stretch (low complexity) spans 566 to 575 (TQVTTSTKTT). Positions 576 to 597 (RNSPDSISIPNSGANHGNENQN) are enriched in polar residues. Ser603 is subject to Phosphoserine. Tyr604 is subject to Phosphotyrosine. Thr607 bears the Phosphothreonine mark. Phosphoserine is present on Ser614. Residues 626–706 (IGPAKDWDES…ANGSSSTIKR (81 aa)) are disordered. Over residues 630 to 639 (KDWDESKSEY) the composition is skewed to basic and acidic residues. Over residues 658–680 (SSSNASLFSSIKNKFKNENANNN) the composition is skewed to low complexity. The span at 681 to 706 (DRSNFTDSLSRTSNYDANGSSSTIKR) shows a compositional bias: polar residues.

It belongs to the ACDP family.

Its subcellular location is the vacuole membrane. In terms of biological role, involved in metal homeostasis and more specially in manganese sensitivity. The polypeptide is Protein MAM3 (MAM3) (Saccharomyces cerevisiae (strain ATCC 204508 / S288c) (Baker's yeast)).